A 155-amino-acid polypeptide reads, in one-letter code: Transcriptional regulator MraZ (155 aa).

SpoVT-AbrB domains follow at residues 7–54 (TYEC…PMEE) and 83–126 (VKTV…DKDK).

This sequence belongs to the MraZ family. As to quaternary structure, forms oligomers.

The protein resides in the cytoplasm. The protein localises to the nucleoid. The protein is Transcriptional regulator MraZ of Christiangramia forsetii (strain DSM 17595 / CGMCC 1.15422 / KT0803) (Gramella forsetii).